An 82-amino-acid chain; its full sequence is Sec-independent protein translocase protein TatA (82 aa).

A helical transmembrane segment spans residues M1–G21. The segment at V43–D82 is disordered.

Belongs to the TatA/E family. The Tat system comprises two distinct complexes: a TatABC complex, containing multiple copies of TatA, TatB and TatC subunits, and a separate TatA complex, containing only TatA subunits. Substrates initially bind to the TatABC complex, which probably triggers association of the separate TatA complex to form the active translocon.

Its subcellular location is the cell inner membrane. Functionally, part of the twin-arginine translocation (Tat) system that transports large folded proteins containing a characteristic twin-arginine motif in their signal peptide across membranes. TatA could form the protein-conducting channel of the Tat system. The polypeptide is Sec-independent protein translocase protein TatA (Pseudomonas paraeruginosa (strain DSM 24068 / PA7) (Pseudomonas aeruginosa (strain PA7))).